A 316-amino-acid chain; its full sequence is Ribonuclease Z (316 aa).

Positions 61, 63, 65, 66, 152, 220, and 279 each coordinate Zn(2+). D65 functions as the Proton acceptor in the catalytic mechanism.

The protein belongs to the RNase Z family. Homodimer. Zn(2+) is required as a cofactor.

The catalysed reaction is Endonucleolytic cleavage of RNA, removing extra 3' nucleotides from tRNA precursor, generating 3' termini of tRNAs. A 3'-hydroxy group is left at the tRNA terminus and a 5'-phosphoryl group is left at the trailer molecule.. In terms of biological role, zinc phosphodiesterase, which displays some tRNA 3'-processing endonuclease activity. Probably involved in tRNA maturation, by removing a 3'-trailer from precursor tRNA. In Clostridium perfringens (strain ATCC 13124 / DSM 756 / JCM 1290 / NCIMB 6125 / NCTC 8237 / Type A), this protein is Ribonuclease Z.